Here is a 430-residue protein sequence, read N- to C-terminus: Bone morphogenetic protein 7 (430 aa).

Residues 1–29 (MHVRSLRAAAPHSFVALWAPLFLLRSALA) form the signal peptide. The propeptide occupies 30–291 (DFSLDNEVHS…ATEVHLRSIR (262 aa)). Residues N186, N301, N320, and N371 are each glycosylated (N-linked (GlcNAc...) asparagine). Positions 290 to 310 (IRSTGGKQRSQNRSKTPKNQE) are disordered. Disulfide bonds link C329-C395, C358-C427, and C362-C429.

The protein belongs to the TGF-beta family. Homodimer; disulfide-linked. Interacts with SOSTDC1. Interacts with TWSG1. Interacts with FBN1 (via N-terminal domain) and FBN2. Interacts with type I receptor ACVR1. Interacts with type II receptor ACVR2A. Interacts with NOG; this interaction inhibits canonical BMP signaling. Interacts with SCUBE3. Interacts with ERFE; the interaction inhibits BMP-induced transcription of HAMP. Interacts with TGFBR3.

The protein resides in the secreted. Growth factor of the TGF-beta superfamily that plays important role in various biological processes, including embryogenesis, hematopoiesis, neurogenesis and skeletal morphogenesis. Initiates the canonical BMP signaling cascade by associating with type I receptor ACVR1 and type II receptor ACVR2A. Once all three components are bound together in a complex at the cell surface, ACVR2A phosphorylates and activates ACVR1. In turn, ACVR1 propagates signal by phosphorylating SMAD1/5/8 that travel to the nucleus and act as activators and repressors of transcription of target genes. For specific functions such as growth cone collapse in developing spinal neurons and chemotaxis of monocytes, also uses BMPR2 as type II receptor. Can also signal through non-canonical pathways such as P38 MAP kinase signaling cascade that promotes brown adipocyte differentiation through activation of target genes, including members of the SOX family of transcription factors. Promotes the expression of HAMP, this is repressed by its interaction with ERFE. This Mus musculus (Mouse) protein is Bone morphogenetic protein 7 (Bmp7).